Reading from the N-terminus, the 955-residue chain is Kinesin-like protein NACK2 (955 aa).

The region spanning 36-357 (KILVTIRVRP…LCFATSAKEV (322 aa)) is the Kinesin motor domain. Position 120–127 (120–127 (GQTSSGKT)) interacts with ATP. Coiled coils occupy residues 366–443 (VVAE…LKGS) and 566–604 (KASL…VMHL).

This sequence belongs to the TRAFAC class myosin-kinesin ATPase superfamily. Kinesin family. KIN-7 subfamily.

Its subcellular location is the cytoplasm. It is found in the nucleus. The protein localises to the cytoskeleton. It localises to the phragmoplast. Functionally, probable plus end-directed motor protein that may function in the NACK-PQR (NPK1-NQK1/MEK1-NRK1) MAP kinase signaling pathway, which is essential for somatic cell cytokinesis, especially for the cell-plate formation and its expansion. May regulate the activity and the localization of NPK1, probably by association through the non-catalytic region of the kinase. The sequence is that of Kinesin-like protein NACK2 (NACK2) from Nicotiana tabacum (Common tobacco).